A 260-amino-acid chain; its full sequence is MNDFDPTTLSSPAAIGHNLRRRPLVRKKLSEMVEEELEQMIRRREFGEGEQLPSERELMAFFNVGRPSVREALAALKRKGLVQINNGERARISRPSADTIIGELSGMAKDFLSHPGGIAHFEQLRLFFESSLVRYAAEHATDAQIALLEQTLALNSQSLDDNALFIRSDVDFHRVLAGIPGNPIFMAIHVALLDWLLAARPAVADADLYEHNNTSYQQHIEIFNAIRRHDPDQADRALQTHLNSVFASWHTLSAQSSSDE.

The HTH gntR-type domain maps to 27–95 (KKLSEMVEEE…NGERARISRP (69 aa)). A DNA-binding region (H-T-H motif) is located at residues 55 to 74 (ERELMAFFNVGRPSVREALA).

It belongs to the NanR family.

Functionally, transcriptional repressor that controls expression of the genes required for the catabolism of sialic acids. This is HTH-type transcriptional repressor NanR from Edwardsiella tarda (strain FL6-60).